A 350-amino-acid chain; its full sequence is Heat-inducible transcription repressor HrcA (350 aa).

It belongs to the HrcA family.

Its function is as follows. Negative regulator of class I heat shock genes (grpE-dnaK-dnaJ and groELS operons). Prevents heat-shock induction of these operons. The chain is Heat-inducible transcription repressor HrcA from Xanthomonas axonopodis pv. citri (strain 306).